We begin with the raw amino-acid sequence, 308 residues long: MRKLVVGSRRSKLALTQSRQFIERLKKVEPDLDIEIKEIVTKGDRIVDKQLSKVGGKGLFVKEIQQELFDHEIDMAIHSLKDVPSELPDGLTLGCIPDREIPLDAFISKNHVQLADLPDGSIVGTSSLRRGAQILAKYPNLEIKWIRGNIDTRLSKLETEDYDAIILAAAGLRRMGWSDDIVTEYLDPELLVPAIGQGALGIECRSDDTELLDLLSKVHNQEVAECVTAERTFLKEMNGSCQVPIGGYATIDDNGRLTFTGLIMSPDGKQRFEQTATGNDPVELGKEVSDILKEQGAKEIIDALNEES.

S-(dipyrrolylmethanemethyl)cysteine is present on Cys241.

It belongs to the HMBS family. As to quaternary structure, monomer. Requires dipyrromethane as cofactor.

It catalyses the reaction 4 porphobilinogen + H2O = hydroxymethylbilane + 4 NH4(+). The protein operates within porphyrin-containing compound metabolism; protoporphyrin-IX biosynthesis; coproporphyrinogen-III from 5-aminolevulinate: step 2/4. In terms of biological role, tetrapolymerization of the monopyrrole PBG into the hydroxymethylbilane pre-uroporphyrinogen in several discrete steps. The sequence is that of Porphobilinogen deaminase from Staphylococcus carnosus (strain TM300).